The chain runs to 48 residues: Small, acid-soluble spore protein O (48 aa).

The disordered stretch occupies residues 1-23 (MVKRKANHVINGMNDAKSQGKGA).

Belongs to the SspO family.

It is found in the spore core. The protein is Small, acid-soluble spore protein O of Bacillus velezensis (strain DSM 23117 / BGSC 10A6 / LMG 26770 / FZB42) (Bacillus amyloliquefaciens subsp. plantarum).